We begin with the raw amino-acid sequence, 187 residues long: MSLLNDILEFNKTFTEQREYEKYQTSKFPDKKMAILSCMDTRLVELLPHAMNLRNGDVKIIKSAGALVTHPFGSIMRSILVAVYELNADEVCVIGHHDCGMSKISSKSMLEKIKARGIPEERIETIKYSGVDFDQWFKSFDSVEASVKDSVDVIKHHPLFPENVPVHGLVIDPKTGKLDLIVNGYNN.

Positions 38, 40, 96, and 99 each coordinate Zn(2+).

It belongs to the beta-class carbonic anhydrase family. Zn(2+) serves as cofactor.

It carries out the reaction hydrogencarbonate + H(+) = CO2 + H2O. Reversible hydration of carbon dioxide. The sequence is that of Putative carbonic anhydrase YtiB (ytiB) from Bacillus subtilis (strain 168).